A 100-amino-acid polypeptide reads, in one-letter code: Aspartyl/glutamyl-tRNA(Asn/Gln) amidotransferase subunit C (100 aa).

Belongs to the GatC family. As to quaternary structure, heterotrimer of A, B and C subunits.

The enzyme catalyses L-glutamyl-tRNA(Gln) + L-glutamine + ATP + H2O = L-glutaminyl-tRNA(Gln) + L-glutamate + ADP + phosphate + H(+). It carries out the reaction L-aspartyl-tRNA(Asn) + L-glutamine + ATP + H2O = L-asparaginyl-tRNA(Asn) + L-glutamate + ADP + phosphate + 2 H(+). Its function is as follows. Allows the formation of correctly charged Asn-tRNA(Asn) or Gln-tRNA(Gln) through the transamidation of misacylated Asp-tRNA(Asn) or Glu-tRNA(Gln) in organisms which lack either or both of asparaginyl-tRNA or glutaminyl-tRNA synthetases. The reaction takes place in the presence of glutamine and ATP through an activated phospho-Asp-tRNA(Asn) or phospho-Glu-tRNA(Gln). This chain is Aspartyl/glutamyl-tRNA(Asn/Gln) amidotransferase subunit C, found in Petrotoga mobilis (strain DSM 10674 / SJ95).